Here is a 261-residue protein sequence, read N- to C-terminus: Small ribosomal subunit protein uS2 (261 aa).

It belongs to the universal ribosomal protein uS2 family.

The sequence is that of Small ribosomal subunit protein uS2 from Streptococcus mutans serotype c (strain ATCC 700610 / UA159).